Consider the following 715-residue polypeptide: MYSHPHNAGVAAAPQKPETFMLSTEAQQALPHDAQVALQQVDNLKYFLISAPVDWQPDQYIRRFLLPTGEYVSCVLWNNLFHISGTDIVRCLSFRFQAFGRPVKNSKKFEEGIFSDLRNLKSGTDASLEEPKSPFLDFLYKNNCIRTQKKQKVFYWYSVPHDRLFLDALERDLKREKMGQEATTMAVSEPALSFQYDSSQSLYEQLTKAQQANSSSFNAQQVSFPPSQSTSPVMRAMDSMPPPPQMMPQPMPQSMAPLADGLDAMVPYAAMGMAPGMPPQPAVKREPDFNRVQYNQNGVPINQGHQRHASMPAYGLEYSPAPSFVSSHYDDYGNRGISFEPLTPPQQAMGMGAEPAYIANEETGLYTAIPDHMNGVNGLNGMIQLPPSNLAGPQFTRSYGSNNVYSVIEGSPTYKQRRRRSSIPPGMSAIAAATAAATAAHRPSDLRRSVSASVGPVAEGDESLDNSPPGLIYSNQPMSMANHQREAMEQMSRHGTPLSTVEGSPGMHNVNLEQQQYPMPSEDMTSPMDDRSRPMAQGGPSVVRRARSATVMGSEVGPYPQKSHSCPIPTCGRLFKRLEHLKRHVRTHTQERPYICPYCSKAFSRSDNLAQHKRTHDRADGGEGLILSGEDEEEYSGDDHLGSLEEASPTSEGGYVTSSLNSAMAHSNTSQHPGSNAVSPNPGPMSHAPTYNSMQTLMQPMQMSQPQPINAGGMM.

The segment covering 214 to 224 has biased composition (low complexity); it reads SSSFNAQQVSF. Disordered stretches follow at residues 214–243, 439–469, and 518–539; these read SSSFNAQQVSFPPSQSTSPVMRAMDSMPPP, AAHRPSDLRRSVSASVGPVAEGDESLDNSPP, and PMPSEDMTSPMDDRSRPMAQGG. C2H2-type zinc fingers lie at residues 564–588 and 594–616; these read HSCPIPTCGRLFKRLEHLKRHVRTH and YICPYCSKAFSRSDNLAQHKRTH. Residues 632–691 form a disordered region; sequence EEEYSGDDHLGSLEEASPTSEGGYVTSSLNSAMAHSNTSQHPGSNAVSPNPGPMSHAPTY. Positions 648–679 are enriched in polar residues; the sequence is SPTSEGGYVTSSLNSAMAHSNTSQHPGSNAVS.

Belongs to the STE12 transcription factor family.

It localises to the nucleus. Its function is as follows. Transcription factor that may function downstream of PMK1 to regulate genes involved in infectious hyphae growth. Is not essential for vegetative growth, conidiation or appressorium formation. May be involved in the regulation of the expression of the cell surface sensor MSB2. This is Transcription factor MST12 from Pyricularia oryzae (strain 70-15 / ATCC MYA-4617 / FGSC 8958) (Rice blast fungus).